Reading from the N-terminus, the 470-residue chain is MTEFPDNTRWQLWIVAFGFFMQSLDTTIVNTALPSMAKSLGESPLHMHMVVVSYVLTVAVMLPASGWLADKIGVRNIFFAAIVLFTLGSLFCALSGTLNQLVLARVLQGVGGAMMVPVGRLTVMKIVPRAQYMAAMTFVALPGQIGPLLGPALGGVLVEYASWHWIFLINIPVGIVGAMATFMLMPNYTIETRRFDLPGFLLLAIGMAVLTLALDGSKSMGISPWTLAGLAAGGAAAILLYLFHAKKNSGALFSLRLFRTPTFSLGLLGSFAGRIGSGMLPFMTPVFLQIGLGFSPFHAGLMMIPMVLGSMGMKRIVVQIVNRFGYRRVLVATTLGLALVSLLFMSVALLGWYYLLPLVLLLQGMVNSARFSSMNTLTLKDLPDTLASSGNSLLSMIMQLSMSIGVTIAGMLLGMFGQQHIGIDSSATHHVFMYTWLCMAVIIALPAIIFARVPNDTQQNMVISRRKRSL.

Residues 1–11 are Periplasmic-facing; sequence MTEFPDNTRWQ. Residues 12–32 traverse the membrane as a helical segment; it reads LWIVAFGFFMQSLDTTIVNTA. The Cytoplasmic segment spans residues 33–48; that stretch reads LPSMAKSLGESPLHMH. A helical transmembrane segment spans residues 49 to 69; that stretch reads MVVVSYVLTVAVMLPASGWLA. At 70 to 76 the chain is on the periplasmic side; sequence DKIGVRN. Residues 77 to 97 traverse the membrane as a helical segment; sequence IFFAAIVLFTLGSLFCALSGT. At 98 to 101 the chain is on the cytoplasmic side; the sequence is LNQL. The chain crosses the membrane as a helical span at residues 102–124; that stretch reads VLARVLQGVGGAMMVPVGRLTVM. Topologically, residues 125–137 are periplasmic; sequence KIVPRAQYMAAMT. The chain crosses the membrane as a helical span at residues 138–158; that stretch reads FVALPGQIGPLLGPALGGVLV. Topologically, residues 159–164 are cytoplasmic; the sequence is EYASWH. The chain crosses the membrane as a helical span at residues 165-185; it reads WIFLINIPVGIVGAMATFMLM. The Periplasmic segment spans residues 186–196; sequence PNYTIETRRFD. The helical transmembrane segment at 197 to 217 threads the bilayer; that stretch reads LPGFLLLAIGMAVLTLALDGS. Topologically, residues 218 to 224 are cytoplasmic; sequence KSMGISP. The chain crosses the membrane as a helical span at residues 225–245; that stretch reads WTLAGLAAGGAAAILLYLFHA. Residues 246-262 lie on the Periplasmic side of the membrane; sequence KKNSGALFSLRLFRTPT. Residues 263 to 283 form a helical membrane-spanning segment; sequence FSLGLLGSFAGRIGSGMLPFM. Residues 284–285 lie on the Cytoplasmic side of the membrane; that stretch reads TP. The helical transmembrane segment at 286 to 306 threads the bilayer; it reads VFLQIGLGFSPFHAGLMMIPM. The Periplasmic segment spans residues 307 to 341; it reads VLGSMGMKRIVVQIVNRFGYRRVLVATTLGLALVS. Residues 342–362 traverse the membrane as a helical segment; it reads LLFMSVALLGWYYLLPLVLLL. Residues 363–395 are Cytoplasmic-facing; sequence QGMVNSARFSSMNTLTLKDLPDTLASSGNSLLS. A helical transmembrane segment spans residues 396 to 416; sequence MIMQLSMSIGVTIAGMLLGMF. Over 417-430 the chain is Periplasmic; the sequence is GQQHIGIDSSATHH. Residues 431-451 form a helical membrane-spanning segment; the sequence is VFMYTWLCMAVIIALPAIIFA. Over 452–470 the chain is Cytoplasmic; it reads RVPNDTQQNMVISRRKRSL.

The protein belongs to the major facilitator superfamily. TCR/Tet family.

It localises to the cell inner membrane. In Salmonella typhi, this protein is Putative multidrug resistance protein MdtD.